The chain runs to 432 residues: Muscle cell intermediate filament protein OV71 (432 aa).

A coil 1B region spans residues lysine 1 to leucine 111. The 277-residue stretch at lysine 1–alanine 277 folds into the IF rod domain. Residues glutamine 112 to lysine 128 are linker 12. Positions asparagine 129 to alanine 277 are coil 2. Positions glycine 278–serine 432 are tail. Residues serine 310–serine 427 form the LTD domain.

This sequence belongs to the intermediate filament family.

The polypeptide is Muscle cell intermediate filament protein OV71 (OV71) (Onchocerca volvulus).